The primary structure comprises 265 residues: Transcription factor BHLH062 (265 aa).

The tract at residues 1–26 (MVPRDRVNAAAAGGGGEGRLVQSGIV) is disordered. A basic motif; degenerate region spans residues 35-48 (PKRIHKSEREKLKR). One can recognise a bHLH domain in the interval 35–85 (PKRIHKSEREKLKRDKQNDLFNELGNLLEPDRQNNGKACVLGETTRILKDL). Residues 49–85 (DKQNDLFNELGNLLEPDRQNNGKACVLGETTRILKDL) form a helix-loop-helix motif region. Residues 75 to 130 (LGETTRILKDLLSQVESLRKENSSLKNESHYVALERNELHDDNSMLRTEILELQNE) are a coiled coil. Residues 200–265 (ESATSEDSEP…TNEEDRIGRS (66 aa)) are disordered. Residues 210–220 (SQEHGISDHVT) show a composition bias toward basic and acidic residues. Polar residues predominate over residues 245-256 (QDQQCSSGTSGT).

This sequence belongs to the bHLH protein family. Interacts with TIFY11A/JAZ9.

It localises to the nucleus. In terms of biological role, transcription factor that plays a positive role in salt stress tolerance. Interacts with TIFY11A/JAZ9 and binds to the promoter of some potassium ion transporter genes to regulate potassium homeostasis during salt stress. This chain is Transcription factor BHLH062, found in Oryza sativa subsp. japonica (Rice).